The following is a 149-amino-acid chain: Cell division protein SepF (149 aa).

It belongs to the SepF family. Homodimer. Interacts with FtsZ.

The protein localises to the cytoplasm. Cell division protein that is part of the divisome complex and is recruited early to the Z-ring. Probably stimulates Z-ring formation, perhaps through the cross-linking of FtsZ protofilaments. Its function overlaps with FtsA. In Pelotomaculum thermopropionicum (strain DSM 13744 / JCM 10971 / SI), this protein is Cell division protein SepF.